A 419-amino-acid chain; its full sequence is UDP-N-acetylglucosamine 1-carboxyvinyltransferase (419 aa).

A phosphoenolpyruvate-binding site is contributed by 22-23 (KN). Arginine 91 is a binding site for UDP-N-acetyl-alpha-D-glucosamine. Residue cysteine 115 is the Proton donor of the active site. A 2-(S-cysteinyl)pyruvic acid O-phosphothioketal modification is found at cysteine 115. Residues 120–124 (RPVDL), 160–163 (KVSV), aspartate 305, and isoleucine 327 contribute to the UDP-N-acetyl-alpha-D-glucosamine site.

The protein belongs to the EPSP synthase family. MurA subfamily.

Its subcellular location is the cytoplasm. The enzyme catalyses phosphoenolpyruvate + UDP-N-acetyl-alpha-D-glucosamine = UDP-N-acetyl-3-O-(1-carboxyvinyl)-alpha-D-glucosamine + phosphate. It functions in the pathway cell wall biogenesis; peptidoglycan biosynthesis. Cell wall formation. Adds enolpyruvyl to UDP-N-acetylglucosamine. In Klebsiella pneumoniae subsp. pneumoniae (strain ATCC 700721 / MGH 78578), this protein is UDP-N-acetylglucosamine 1-carboxyvinyltransferase.